The following is a 283-amino-acid chain: NAD kinase (283 aa).

The Proton acceptor role is filled by aspartate 66. Residues 66–67 (DG), 140–141 (ND), arginine 151, lysine 168, aspartate 170, 181–186 (TGYCLS), and glutamine 240 contribute to the NAD(+) site.

It belongs to the NAD kinase family. A divalent metal cation serves as cofactor.

The protein resides in the cytoplasm. It catalyses the reaction NAD(+) + ATP = ADP + NADP(+) + H(+). Functionally, involved in the regulation of the intracellular balance of NAD and NADP, and is a key enzyme in the biosynthesis of NADP. Catalyzes specifically the phosphorylation on 2'-hydroxyl of the adenosine moiety of NAD to yield NADP. The sequence is that of NAD kinase from Geobacter metallireducens (strain ATCC 53774 / DSM 7210 / GS-15).